We begin with the raw amino-acid sequence, 659 residues long: Enzymatic polyprotein (659 aa).

The protease stretch occupies residues 1–180 (MSLRNRTNPN…FLEEGGNHVD (180 aa)). Residue D34 is part of the active site. In terms of domain architecture, Reverse transcriptase spans 252-436 (LELKVIKPSK…EKINFLGLEI (185 aa)).

It belongs to the caulimoviridae enzymatic polyprotein family.

It carries out the reaction DNA(n) + a 2'-deoxyribonucleoside 5'-triphosphate = DNA(n+1) + diphosphate. In terms of biological role, encodes for at least two polypeptides: protease (PR) and reverse transcriptase (RT). The protease processes the polyprotein in cis. Reverse transcriptase is multifunctional enzyme that converts the viral RNA genome into dsDNA in viral cytoplasmic capsids. This enzyme displays a DNA polymerase activity that can copy either DNA or RNA templates, and a ribonuclease H (RNase H) activity that cleaves the RNA strand of RNA-DNA heteroduplexes in a partially processive 3'- to 5'-endonucleasic mode. Neo-synthesized pregenomic RNA (pgRNA) are encapsidated, and reverse-transcribed inside the nucleocapsid. Partial (+)DNA is synthesized from the (-)DNA template and generates the relaxed circular DNA (RC-DNA) genome. After budding and infection, the RC-DNA migrates in the nucleus, and is converted into a plasmid-like covalently closed circular DNA (cccDNA). This chain is Enzymatic polyprotein, found in Dianthus caryophyllus (Carnation).